Here is a 359-residue protein sequence, read N- to C-terminus: 3-dehydroquinate synthase (359 aa).

Residues 72-77 (EGEIHK), 106-110 (GVIGD), 130-131 (TS), lysine 143, lysine 152, and 170-173 (CLKT) contribute to the NAD(+) site. Positions 185, 248, and 264 each coordinate Zn(2+).

Belongs to the sugar phosphate cyclases superfamily. Dehydroquinate synthase family. The cofactor is Co(2+). It depends on Zn(2+) as a cofactor. NAD(+) is required as a cofactor.

The protein resides in the cytoplasm. The catalysed reaction is 7-phospho-2-dehydro-3-deoxy-D-arabino-heptonate = 3-dehydroquinate + phosphate. It participates in metabolic intermediate biosynthesis; chorismate biosynthesis; chorismate from D-erythrose 4-phosphate and phosphoenolpyruvate: step 2/7. Its function is as follows. Catalyzes the conversion of 3-deoxy-D-arabino-heptulosonate 7-phosphate (DAHP) to dehydroquinate (DHQ). This Dehalococcoides mccartyi (strain ATCC BAA-2266 / KCTC 15142 / 195) (Dehalococcoides ethenogenes (strain 195)) protein is 3-dehydroquinate synthase.